Here is a 451-residue protein sequence, read N- to C-terminus: uncharacterized protein (451 aa).

Helical transmembrane passes span 11-31 (VLLK…YIDL), 56-76 (IQIY…SIGT), 151-171 (IIGI…NIYL), 175-195 (FWLI…LIIF), and 207-227 (VYSV…TIKI). Residues 250–300 (TKSNNNNNNNNNNKQDDNIIYDTDSSFNGQSSSSSSSSSSSSSSSSSATTT) form a disordered region. Low complexity-rich tracts occupy residues 253-262 (NNNNNNNNNN) and 280-300 (SSSS…ATTT). Helical transmembrane passes span 392 to 412 (FVGV…SDYS) and 413 to 433 (LLTI…LTYL).

Its subcellular location is the membrane. This is an uncharacterized protein from Dictyostelium discoideum (Social amoeba).